Here is a 147-residue protein sequence, read N- to C-terminus: uncharacterized protein (147 aa).

Residues 1–137 (MRDNTIGSLI…LYELMTKVHK (137 aa)) form the HTH marR-type domain. Positions 53–76 (QMELAEKVTVTQGGISRMLTRLEK) form a DNA-binding region, H-T-H motif.

This is an uncharacterized protein from Bacillus thuringiensis subsp. konkukian (strain 97-27).